A 236-amino-acid chain; its full sequence is Rho-related GTP-binding protein RhoV (236 aa).

The tract at residues Met-1–Ser-27 is disordered. At Ser-25 the chain carries Phosphoserine. Residues Gly-38–Ser-45, Asp-85–Gln-89, and Thr-143–Asp-146 contribute to the GTP site. Cys-234 is lipidated: S-palmitoyl cysteine.

It belongs to the small GTPase superfamily. Rho family. In terms of assembly, interacts with PAK2. Mg(2+) is required as a cofactor.

Its subcellular location is the cell membrane. The protein resides in the endosome membrane. Plays a role in the control of the actin cytoskeleton via activation of the JNK pathway. This Bos taurus (Bovine) protein is Rho-related GTP-binding protein RhoV.